A 223-amino-acid polypeptide reads, in one-letter code: MGIKGMWKDLRTSPVDTLVRWQEQRLLWLLMAVAMGALIILAHSFFQIYLYMAPCEQCVYIRYAMFVMVIGGLVAAINPKNIILKLIGCVMAFYGSILGLKFSLKLNDIHHAVHNPDPDSLFGVQGCSTDPTFPFNLPLAQWAPNWFKPTGDCGYDAPIVPDGVTLSSTQQWFVEMYQQSEGWYLLPPWHFMNMAQACMLAFGMCLVLLVIMSGAWALKIIRG.

A helical transmembrane segment spans residues 26–46 (LLWLLMAVAMGALIILAHSFF). An intrachain disulfide couples Cys-55 to Cys-58. A run of 2 helical transmembrane segments spans residues 59–78 (VYIR…AAIN) and 82–102 (IILK…GLKF). A disulfide bridge links Cys-127 with Cys-153. The chain crosses the membrane as a helical span at residues 198-218 (CMLAFGMCLVLLVIMSGAWAL).

This sequence belongs to the DsbB family. DsbI subfamily. As to quaternary structure, interacts with DsbL.

The protein localises to the cell inner membrane. Its function is as follows. Required for disulfide bond formation in some proteins. Part of a redox system composed of DsbI and DsbL that mediates formation of an essential disulfide bond in AssT. The chain is Protein-disulfide oxidoreductase DsbI from Escherichia coli O1:K1 / APEC.